Reading from the N-terminus, the 356-residue chain is DNA integrity scanning protein DisA (356 aa).

The 139-residue stretch at 11–149 (VHTMRDTLQR…EGKSHILEEP (139 aa)) folds into the DAC domain. Residues Gly78, Leu96, and 109-113 (TRHRS) contribute to the ATP site.

Belongs to the DisA family. As to quaternary structure, homooctamer. Mg(2+) is required as a cofactor.

It catalyses the reaction 2 ATP = 3',3'-c-di-AMP + 2 diphosphate. Functionally, participates in a DNA-damage check-point. DisA forms globular foci that rapidly scan along the chromosomes searching for lesions. In terms of biological role, also has diadenylate cyclase activity, catalyzing the condensation of 2 ATP molecules into cyclic di-AMP (c-di-AMP). c-di-AMP likely acts as a signaling molecule that may couple DNA integrity with a cellular process. The sequence is that of DNA integrity scanning protein DisA from Corynebacterium efficiens (strain DSM 44549 / YS-314 / AJ 12310 / JCM 11189 / NBRC 100395).